A 304-amino-acid polypeptide reads, in one-letter code: Ribosomal protein L11 methyltransferase (304 aa).

Residues T147, G168, D190, and N238 each contribute to the S-adenosyl-L-methionine site.

The protein belongs to the methyltransferase superfamily. PrmA family.

The protein resides in the cytoplasm. The catalysed reaction is L-lysyl-[protein] + 3 S-adenosyl-L-methionine = N(6),N(6),N(6)-trimethyl-L-lysyl-[protein] + 3 S-adenosyl-L-homocysteine + 3 H(+). In terms of biological role, methylates ribosomal protein L11. This chain is Ribosomal protein L11 methyltransferase, found in Prochlorococcus marinus (strain SARG / CCMP1375 / SS120).